The following is a 420-amino-acid chain: MDTKRCFANRFDDYQGSLLAGQCEEAVAPLVTSTIERILQELPPLGGGAEARGATGAGSSCQGGLYSGVAGVAYMLYHVSQSPLFAAARERYLRFAKRLIDACLRAEEWGETDADTRAAFLLGGAGVYAVATLVYHALGRPDYVQPLGKFRALCAVCAPVSFLDCGSDELFVGRAGYLCAALVLKQKLAQEVLTPTQIKAICQAILDSGKQYALKKRKPFPLMYSYYGTEYLGAAHGLSSILQMLLSYQEHLKPSDRELVWQSVDFLMEQEQNCNWPPELGETIERENELVHWCHGAPGIAYLFAKAYLISKKPQYLDTCIRCGELTWQKGLLKKGPGICHGVAGSAYVFLLLYRLTGNSKYIYRAQRFAQFLFTEEFKSGSRVLESIYSLYEGFSGTVCFLIDLLQPNQAEFPLFSVFV.

Belongs to the LanC-like protein family.

In Mus musculus (Mouse), this protein is LanC-like protein 3 (Lancl3).